We begin with the raw amino-acid sequence, 299 residues long: Foldase protein PrsA (299 aa).

Residues 1–19 (MKKWTIAASLSIGVLALSA) form the signal peptide. Cysteine 20 carries N-palmitoyl cysteine lipidation. Cysteine 20 is lipidated: S-diacylglycerol cysteine. The region spanning 137–227 (NTEIQAQHIL…HGTHIIKVND (91 aa)) is the PpiC domain.

It belongs to the PrsA family.

Its subcellular location is the cell membrane. It carries out the reaction [protein]-peptidylproline (omega=180) = [protein]-peptidylproline (omega=0). Its function is as follows. Plays a major role in protein secretion by helping the post-translocational extracellular folding of several secreted proteins. This is Foldase protein PrsA from Oceanobacillus iheyensis (strain DSM 14371 / CIP 107618 / JCM 11309 / KCTC 3954 / HTE831).